The following is a 322-amino-acid chain: Pantothenate kinase (322 aa).

Residue 104–111 (GSVAVGKS) participates in ATP binding.

Belongs to the prokaryotic pantothenate kinase family.

It localises to the cytoplasm. The catalysed reaction is (R)-pantothenate + ATP = (R)-4'-phosphopantothenate + ADP + H(+). Its pathway is cofactor biosynthesis; coenzyme A biosynthesis; CoA from (R)-pantothenate: step 1/5. This is Pantothenate kinase from Leifsonia xyli subsp. xyli (strain CTCB07).